Consider the following 243-residue polypeptide: 4-hydroxy-tetrahydrodipicolinate reductase (243 aa).

Residues 9–14 (GANGKM), 78–80 (GTS), and 104–107 (APNF) each bind NAD(+). H134 functions as the Proton donor/acceptor in the catalytic mechanism. H135 provides a ligand contact to (S)-2,3,4,5-tetrahydrodipicolinate. The Proton donor role is filled by K138. 144–145 (GT) contributes to the (S)-2,3,4,5-tetrahydrodipicolinate binding site.

This sequence belongs to the DapB family.

Its subcellular location is the cytoplasm. It catalyses the reaction (S)-2,3,4,5-tetrahydrodipicolinate + NAD(+) + H2O = (2S,4S)-4-hydroxy-2,3,4,5-tetrahydrodipicolinate + NADH + H(+). The enzyme catalyses (S)-2,3,4,5-tetrahydrodipicolinate + NADP(+) + H2O = (2S,4S)-4-hydroxy-2,3,4,5-tetrahydrodipicolinate + NADPH + H(+). It participates in amino-acid biosynthesis; L-lysine biosynthesis via DAP pathway; (S)-tetrahydrodipicolinate from L-aspartate: step 4/4. Its function is as follows. Catalyzes the conversion of 4-hydroxy-tetrahydrodipicolinate (HTPA) to tetrahydrodipicolinate. This Legionella pneumophila subsp. pneumophila (strain Philadelphia 1 / ATCC 33152 / DSM 7513) protein is 4-hydroxy-tetrahydrodipicolinate reductase.